Consider the following 290-residue polypeptide: ATP synthase gamma chain (290 aa).

The protein belongs to the ATPase gamma chain family. In terms of assembly, F-type ATPases have 2 components, CF(1) - the catalytic core - and CF(0) - the membrane proton channel. CF(1) has five subunits: alpha(3), beta(3), gamma(1), delta(1), epsilon(1). CF(0) has three main subunits: a, b and c.

It localises to the cell membrane. Its function is as follows. Produces ATP from ADP in the presence of a proton gradient across the membrane. The gamma chain is believed to be important in regulating ATPase activity and the flow of protons through the CF(0) complex. The polypeptide is ATP synthase gamma chain (Listeria innocua serovar 6a (strain ATCC BAA-680 / CLIP 11262)).